A 235-amino-acid chain; its full sequence is Carbohydrate deacetylase (235 aa).

Residues His-61 and His-124 each coordinate Mg(2+).

The protein belongs to the YdjC deacetylase family. Mg(2+) serves as cofactor.

Functionally, probably catalyzes the deacetylation of acetylated carbohydrates an important step in the degradation of oligosaccharides. The sequence is that of Carbohydrate deacetylase from Bacillus cereus (strain B4264).